The primary structure comprises 639 residues: Zinc finger protein ZIC 5 (639 aa).

Disordered regions lie at residues 113–171 (PCGG…GHSR), 189–251 (HGAP…GHPH), 323–355 (PGPH…HLPG), and 379–409 (PDEL…PCSK). The span at 124 to 150 (SAPPPPAPPLPPTPSPPPPPPPPPPPA) shows a compositional bias: pro residues. Pro residues-rich tracts occupy residues 331-343 (APPP…PAPA) and 385-401 (LPPP…PPPA). The segment at 434-461 (HVCFWEDCPREGKPFKAKYKLINHIRVH) adopts a C2H2-type 1; atypical zinc-finger fold. 3 C2H2-type zinc fingers span residues 467 to 491 (FPCP…KRTH), 497 to 521 (FKCE…SHVH), and 527 to 551 (YYCK…MKIH). A disordered region spans residues 548-568 (MKIHCKSPPPSPGPLGYSSVG). Phosphoserine occurs at positions 554, 558, and 576. The tract at residues 607–639 (APSHLHTPSSNGTTSETEDEEIYGNPEVVRTIH) is disordered. A compositionally biased stretch (polar residues) spans 612-621 (HTPSSNGTTS).

Belongs to the GLI C2H2-type zinc-finger protein family.

It is found in the nucleus. In terms of biological role, essential for neural crest development, converting cells from an epidermal fate to a neural crest cell fate. Binds to DNA. In Homo sapiens (Human), this protein is Zinc finger protein ZIC 5 (ZIC5).